We begin with the raw amino-acid sequence, 39 residues long: Omega-theraphotoxin-Ba1b (39 aa).

Cystine bridges form between C4–C17, C8–C31, and C25–C36.

The protein belongs to the neurotoxin 12 (Hwtx-2) family. 06 (TXP1) subfamily. In terms of tissue distribution, expressed by the venom gland.

It localises to the secreted. Inhibits voltage-gated calcium channels (Cav) in rat cerebellar granule cells. Has insecticidal activity to crickets (Acheta domesticus). Is not toxic to mice. The polypeptide is Omega-theraphotoxin-Ba1b (Brachypelma albiceps (Mexican golden redrump tarantula)).